The chain runs to 448 residues: Tubulin alpha chain, nucleomorph (448 aa).

GTP contacts are provided by Gln-11, Glu-71, Ser-140, Gly-144, Thr-145, Thr-179, Asn-206, and Asn-228. Glu-71 provides a ligand contact to Mg(2+). Residue Glu-254 is part of the active site.

This sequence belongs to the tubulin family. In terms of assembly, dimer of alpha and beta chains. A typical microtubule is a hollow water-filled tube with an outer diameter of 25 nm and an inner diameter of 15 nM. Alpha-beta heterodimers associate head-to-tail to form protofilaments running lengthwise along the microtubule wall with the beta-tubulin subunit facing the microtubule plus end conferring a structural polarity. Microtubules usually have 13 protofilaments but different protofilament numbers can be found in some organisms and specialized cells. Requires Mg(2+) as cofactor.

The enzyme catalyses GTP + H2O = GDP + phosphate + H(+). Its function is as follows. Tubulin is the major constituent of microtubules, a cylinder consisting of laterally associated linear protofilaments composed of alpha- and beta-tubulin heterodimers. Microtubules grow by the addition of GTP-tubulin dimers to the microtubule end, where a stabilizing cap forms. Below the cap, tubulin dimers are in GDP-bound state, owing to GTPase activity of alpha-tubulin. This is Tubulin alpha chain, nucleomorph (tubA) from Guillardia theta (Cryptophyte).